The primary structure comprises 120 residues: Large ribosomal subunit protein bL17 (120 aa).

This sequence belongs to the bacterial ribosomal protein bL17 family. Part of the 50S ribosomal subunit. Contacts protein L32.

In Desulforapulum autotrophicum (strain ATCC 43914 / DSM 3382 / VKM B-1955 / HRM2) (Desulfobacterium autotrophicum), this protein is Large ribosomal subunit protein bL17.